A 542-amino-acid polypeptide reads, in one-letter code: Prolyl 3-hydroxylase OGFOD1 (542 aa).

In terms of domain architecture, Fe2OG dioxygenase spans 134–239; it reads DLESTIDMSC…RLSISGWFHG (106 aa). His-155 and Asp-157 together coordinate Fe cation. A 2-oxoglutarate-binding site is contributed by Tyr-169. Fe cation is bound at residue His-218. Arg-230 serves as a coordination point for 2-oxoglutarate. The segment at 371 to 435 is disordered; sequence SEDEPEDKKE…AKKESSVPTC (65 aa). Residues 395-417 show a composition bias toward polar residues; the sequence is SHSSSEPENSWAATSDSSLQSEG.

The protein belongs to the TPA1 family. As to quaternary structure, monomer. Fe(2+) serves as cofactor. Requires L-ascorbate as cofactor.

It localises to the cytoplasm. It is found in the nucleus. It carries out the reaction [ribosomal protein uS12]-L-proline + 2-oxoglutarate + O2 = [ribosomal protein uS12]-(3S)-3-hydroxy-L-proline + succinate + CO2. In terms of biological role, prolyl 3-hydroxylase that catalyzes 3-hydroxylation of 'Pro-62' of small ribosomal subunit uS12 (RPS23), thereby regulating protein translation termination efficiency. Involved in stress granule formation. This is Prolyl 3-hydroxylase OGFOD1 (OGFOD1) from Bos taurus (Bovine).